A 310-amino-acid polypeptide reads, in one-letter code: p-hydroxybenzoic acid efflux pump subunit AaeA (310 aa).

A helical transmembrane segment spans residues 12–32 (AITVALVILAFIAISRAWVFY).

This sequence belongs to the membrane fusion protein (MFP) (TC 8.A.1) family.

Its subcellular location is the cell inner membrane. In terms of biological role, forms an efflux pump with AaeB. The protein is p-hydroxybenzoic acid efflux pump subunit AaeA of Enterobacter sp. (strain 638).